A 262-amino-acid chain; its full sequence is Global transcriptional regulator CodY (262 aa).

The segment at 1-159 is GAF domain; sequence MATLLEKTRK…ATTVIGVQLS (159 aa). Residues 207–226 constitute a DNA-binding region (H-T-H motif); that stretch reads ASVIADKIGITRSVIVNALR.

This sequence belongs to the CodY family.

It is found in the cytoplasm. Functionally, DNA-binding global transcriptional regulator which is involved in the adaptive response to starvation and acts by directly or indirectly controlling the expression of numerous genes in response to nutrient availability. During rapid exponential growth, CodY is highly active and represses genes whose products allow adaptation to nutrient depletion. The polypeptide is Global transcriptional regulator CodY (Lactococcus lactis subsp. lactis (strain IL1403) (Streptococcus lactis)).